The sequence spans 360 residues: Protein Wnt-2 (360 aa).

The N-terminal stretch at 1–25 is a signal peptide; that stretch reads MNSPLRGIWLWLPLLLTWLTPEVSS. Disulfide bonds link cysteine 76-cysteine 87, cysteine 127-cysteine 135, cysteine 137-cysteine 157, cysteine 206-cysteine 220, cysteine 208-cysteine 215, cysteine 278-cysteine 309, cysteine 294-cysteine 304, cysteine 308-cysteine 348, cysteine 324-cysteine 339, cysteine 326-cysteine 336, and cysteine 331-cysteine 332. The O-palmitoleoyl serine; by PORCN moiety is linked to residue serine 212. A glycan (N-linked (GlcNAc...) asparagine) is linked at asparagine 295.

This sequence belongs to the Wnt family. Post-translationally, palmitoleoylation is required for efficient binding to frizzled receptors. Depalmitoleoylation leads to Wnt signaling pathway inhibition.

It is found in the secreted. Its subcellular location is the extracellular space. The protein resides in the extracellular matrix. In terms of biological role, ligand for members of the frizzled family of seven transmembrane receptors. Functions in the canonical Wnt signaling pathway that results in activation of transcription factors of the TCF/LEF family. Functions as a upstream regulator of FGF10 expression. Plays an important role in embryonic lung development. May contribute to embryonic brain development by regulating the proliferation of dopaminergic precursors and neurons. The polypeptide is Protein Wnt-2 (WNT2) (Callithrix jacchus (White-tufted-ear marmoset)).